A 409-amino-acid chain; its full sequence is Aspartate aminotransferase, cytoplasmic (409 aa).

N-acetylserine is present on Ser-2. L-aspartate is bound by residues Gly-38, Trp-138, and Asn-191. Position 255 is an N6-(pyridoxal phosphate)lysine (Lys-255). Arg-383 is a binding site for L-aspartate. Ser-385 carries the phosphoserine modification.

It belongs to the class-I pyridoxal-phosphate-dependent aminotransferase family. As to quaternary structure, homodimer. It depends on pyridoxal 5'-phosphate as a cofactor.

The protein resides in the cytoplasm. The catalysed reaction is L-aspartate + 2-oxoglutarate = oxaloacetate + L-glutamate. Its function is as follows. Plays a key role in amino acid metabolism. The sequence is that of Aspartate aminotransferase, cytoplasmic from Schizosaccharomyces pombe (strain 972 / ATCC 24843) (Fission yeast).